A 187-amino-acid polypeptide reads, in one-letter code: Signal peptidase complex catalytic subunit SEC11 (187 aa).

The Cytoplasmic segment spans residues 1–18; that stretch reads MLSSLSPYMANPRNTLSQ. A helical; Signal-anchor for type II membrane protein membrane pass occupies residues 19 to 39; that stretch reads VLNFGLVLSSAFMVWKALSVI. The Lumenal segment spans residues 40–187; the sequence is TNSASPVVVV…MGLMVMLQRE (148 aa). Residues Ser-53 and His-92 each act as charge relay system in the active site. Residue Asn-125 is glycosylated (N-linked (GlcNAc...) asparagine). The Charge relay system role is filled by Asp-129. Residues 173–184 are C-terminal short (CTS) helix; that stretch reads VLLGFMGLMVML.

This sequence belongs to the peptidase S26B family. As to quaternary structure, component of the signal peptidase complex (SPC) composed of a catalytic subunit SEC11 and three accessory subunits SPC1, SPC2 and SPC3. The complex induces a local thinning of the ER membrane which is used to measure the length of the signal peptide (SP) h-region of protein substrates. This ensures the selectivity of the complex towards h-regions shorter than 18-20 amino acids. SPC associates with the translocon complex.

It localises to the endoplasmic reticulum membrane. The catalysed reaction is Cleavage of hydrophobic, N-terminal signal or leader sequences from secreted and periplasmic proteins.. In terms of biological role, catalytic component of the signal peptidase complex (SPC) which catalyzes the cleavage of N-terminal signal sequences from nascent proteins as they are translocated into the lumen of the endoplasmic reticulum. Specifically cleaves N-terminal signal peptides that contain a hydrophobic alpha-helix (h-region) shorter than 18-20 amino acids. The chain is Signal peptidase complex catalytic subunit SEC11 (SEC11) from Ajellomyces capsulatus (strain G186AR / H82 / ATCC MYA-2454 / RMSCC 2432) (Darling's disease fungus).